A 339-amino-acid chain; its full sequence is Ketol-acid reductoisomerase (NADP(+)) (339 aa).

Positions 1–182 (MRVYYDRDAD…GGGRAGIIET (182 aa)) constitute a KARI N-terminal Rossmann domain. Residues 24-27 (YGSQ), R48, S51, S53, and 83-86 (DELQ) contribute to the NADP(+) site. The active site involves H108. G134 provides a ligand contact to NADP(+). One can recognise a KARI C-terminal knotted domain in the interval 183–328 (TFREECETDL…AKLRDMMPWI (146 aa)). 4 residues coordinate Mg(2+): D191, E195, E227, and E231. Residue S252 coordinates substrate.

This sequence belongs to the ketol-acid reductoisomerase family. The cofactor is Mg(2+).

It carries out the reaction (2R)-2,3-dihydroxy-3-methylbutanoate + NADP(+) = (2S)-2-acetolactate + NADPH + H(+). The enzyme catalyses (2R,3R)-2,3-dihydroxy-3-methylpentanoate + NADP(+) = (S)-2-ethyl-2-hydroxy-3-oxobutanoate + NADPH + H(+). Its pathway is amino-acid biosynthesis; L-isoleucine biosynthesis; L-isoleucine from 2-oxobutanoate: step 2/4. The protein operates within amino-acid biosynthesis; L-valine biosynthesis; L-valine from pyruvate: step 2/4. Its function is as follows. Involved in the biosynthesis of branched-chain amino acids (BCAA). Catalyzes an alkyl-migration followed by a ketol-acid reduction of (S)-2-acetolactate (S2AL) to yield (R)-2,3-dihydroxy-isovalerate. In the isomerase reaction, S2AL is rearranged via a Mg-dependent methyl migration to produce 3-hydroxy-3-methyl-2-ketobutyrate (HMKB). In the reductase reaction, this 2-ketoacid undergoes a metal-dependent reduction by NADPH to yield (R)-2,3-dihydroxy-isovalerate. This chain is Ketol-acid reductoisomerase (NADP(+)), found in Nitrobacter hamburgensis (strain DSM 10229 / NCIMB 13809 / X14).